A 396-amino-acid chain; its full sequence is Obg-like ATPase 1 (396 aa).

Residues 23–283 (LKIGIVGLPN…LSAEERQKYL (261 aa)) form the OBG-type G domain. 32 to 37 (NVGKST) contributes to the ATP binding site. Residues serine 36 and threonine 56 each contribute to the Mg(2+) site. Leucine 231 contacts ATP. Positions 267 to 274 (LELRLQEL) match the Nuclear export signal motif. At lysine 294 the chain carries N6-acetyllysine. Positions 304–387 (QLEYFFTAGP…EDGDIIFFKF (84 aa)) constitute a TGS domain.

This sequence belongs to the TRAFAC class OBG-HflX-like GTPase superfamily. OBG GTPase family. YchF/OLA1 subfamily. As to quaternary structure, monomer. It depends on Mg(2+) as a cofactor.

The protein localises to the cytoplasm. It localises to the nucleus. The protein resides in the nucleolus. In terms of biological role, hydrolyzes ATP, and can also hydrolyze GTP with lower efficiency. Has lower affinity for GTP. The polypeptide is Obg-like ATPase 1 (Bos taurus (Bovine)).